Consider the following 784-residue polypeptide: Transcriptional activator somA (784 aa).

Positions 43 to 75 constitute a LisH domain; that stretch reads MINNLNTYIYDYFLKRGYHECARALVKDESIKL. Over residues 75–84 the composition is skewed to polar residues; that stretch reads LNTEPPTKTS. Disordered regions lie at residues 75–122, 212–295, 424–726, and 764–784; these read LNTE…PNLA, GLSQ…SQAL, MMAR…DLSI, and GFDP…GDGL. Residues 103 to 117 show a composition bias toward basic and acidic residues; it reads DSKDGDKIKIPDDLP. Over residues 215 to 233 the composition is skewed to low complexity; that stretch reads QQQIAQLQKNQQMHMMQQM. The span at 234–244 shows a compositional bias: basic and acidic residues; it reads QREHSDMDMNG. Low complexity predominate over residues 247 to 259; sequence PQSPSSAENAPSP. Residues 453-467 are compositionally biased toward polar residues; the sequence is SPQGSRAGTSPNPNE. Low complexity predominate over residues 564-592; the sequence is QQQQGQPMGPQQSPAQQPQSTGTPQTQNS. A compositionally biased stretch (polar residues) spans 607 to 624; the sequence is RTSPQSQNAAPPTPQQAN. Residues 629–638 show a composition bias toward basic and acidic residues; that stretch reads KKREPKDTAR. Composition is skewed to low complexity over residues 644-661 and 691-701; these read KQPA…TPSS and PTTSAPQQPTS. The span at 702–715 shows a compositional bias: pro residues; that stretch reads APAPQPIVQQPPPD.

It belongs to the FLO8 family. As to quaternary structure, interacts with ptaB.

It is found in the nucleus. Its function is as follows. Transcription factor that controls the expression of genes related to the process of conidiation and adherence and regulates biofilm formation. Controls conidiation and adhesion primarily by affecting the expression of the three regulatory genes flbB, stuA and medA. Required for virulence in an egg and a mouse infection model. This Aspergillus fumigatus (strain ATCC MYA-4609 / CBS 101355 / FGSC A1100 / Af293) (Neosartorya fumigata) protein is Transcriptional activator somA.